The primary structure comprises 351 residues: Holliday junction branch migration complex subunit RuvB (351 aa).

The interval 4–185 (HDRELVSPEA…FGFVAHMDFY (182 aa)) is large ATPase domain (RuvB-L). ATP contacts are provided by residues Leu-24, Arg-25, Gly-66, Lys-69, Thr-70, Thr-71, 132–134 (EDF), Arg-175, Tyr-185, and Arg-222. Thr-70 lines the Mg(2+) pocket. A small ATPAse domain (RuvB-S) region spans residues 186 to 256 (SPEELELILH…CARAALSLYE (71 aa)). A head domain (RuvB-H) region spans residues 259-351 (DEGLDRLDRA…AALFDPDEEP (93 aa)). The DNA site is built by Arg-314 and Arg-319.

Belongs to the RuvB family. In terms of assembly, homohexamer. Forms an RuvA(8)-RuvB(12)-Holliday junction (HJ) complex. HJ DNA is sandwiched between 2 RuvA tetramers; dsDNA enters through RuvA and exits via RuvB. An RuvB hexamer assembles on each DNA strand where it exits the tetramer. Each RuvB hexamer is contacted by two RuvA subunits (via domain III) on 2 adjacent RuvB subunits; this complex drives branch migration. In the full resolvosome a probable DNA-RuvA(4)-RuvB(12)-RuvC(2) complex forms which resolves the HJ.

Its subcellular location is the cytoplasm. It carries out the reaction ATP + H2O = ADP + phosphate + H(+). In terms of biological role, the RuvA-RuvB-RuvC complex processes Holliday junction (HJ) DNA during genetic recombination and DNA repair, while the RuvA-RuvB complex plays an important role in the rescue of blocked DNA replication forks via replication fork reversal (RFR). RuvA specifically binds to HJ cruciform DNA, conferring on it an open structure. The RuvB hexamer acts as an ATP-dependent pump, pulling dsDNA into and through the RuvAB complex. RuvB forms 2 homohexamers on either side of HJ DNA bound by 1 or 2 RuvA tetramers; 4 subunits per hexamer contact DNA at a time. Coordinated motions by a converter formed by DNA-disengaged RuvB subunits stimulates ATP hydrolysis and nucleotide exchange. Immobilization of the converter enables RuvB to convert the ATP-contained energy into a lever motion, pulling 2 nucleotides of DNA out of the RuvA tetramer per ATP hydrolyzed, thus driving DNA branch migration. The RuvB motors rotate together with the DNA substrate, which together with the progressing nucleotide cycle form the mechanistic basis for DNA recombination by continuous HJ branch migration. Branch migration allows RuvC to scan DNA until it finds its consensus sequence, where it cleaves and resolves cruciform DNA. This chain is Holliday junction branch migration complex subunit RuvB, found in Thermobifida fusca (strain YX).